We begin with the raw amino-acid sequence, 241 residues long: Xyloglucan-specific endo-beta-1,4-glucanase 1 (241 aa).

Residues 1–19 (MKGFFAGVVAAATLAVASA) form the signal peptide. The active site involves glutamate 136. Residues asparagine 174 and asparagine 190 are each glycosylated (N-linked (GlcNAc...) asparagine). Glutamate 222 is a catalytic residue.

The protein belongs to the glycosyl hydrolase 12 (cellulase H) family. As to quaternary structure, interacts with host apoplastic glucanase inhibitor GIP1.

It localises to the secreted. The protein resides in the host. It catalyses the reaction xyloglucan + H2O = xyloglucan oligosaccharides.. The xyloglucanase activity is inhibited by the binding of the host apoplastic glucanase inhibitor GIP1. Its function is as follows. Glycoside hydrolase that exhibits xyloglucanase activity. Acts as an important virulence factor during P.sojae infection but also acts as a pathogen-associated molecular pattern (PAMP) in soybean and solanaceous species, where it can trigger defense responses including cell death. XEG1-induced cell death can be suppressed by P.sojae RxLR effectors. The PAMP activity is independent of its xyloglucanase activity. XEG1 induces plant defense responses in a RLP kinase Serk3/Bak1-dependent manner in Nicotiana benthamiana. Moreover, the perception of XEG1 occurs independently of the perception of ethylene-inducing xylanase Eix2 in Tomato. With truncated paralog XLP1, is required to elevate apoplastic sugar during P.sojae infection. This is Xyloglucan-specific endo-beta-1,4-glucanase 1 from Phytophthora sojae (strain P6497) (Soybean stem and root rot agent).